The primary structure comprises 358 residues: Carbohydrate sulfotransferase 10 (358 aa).

At 1-6 (MHHQWL) the chain is on the cytoplasmic side. The chain crosses the membrane as a helical; Signal-anchor for type II membrane protein span at residues 7 to 27 (LLAACFWVIFMFMVASKFITL). The Lumenal portion of the chain corresponds to 28–358 (TFKDPDGYGA…GYRVPDFLLN (331 aa)). A glycan (N-linked (GlcNAc...) asparagine) is linked at Asn101. 3'-phosphoadenylyl sulfate-binding positions include 129 to 135 (PKVGNTQ) and 191 to 199 (RDPFERLIS). Asn318 is a glycosylation site (N-linked (GlcNAc...) asparagine).

Belongs to the sulfotransferase 2 family. Predominantly expressed in hypertrophic, prehypertrophic and proliferative chondrocytes at E12 but is down-regulated in epiphyseal chondrocytes.

It is found in the golgi apparatus membrane. Its function is as follows. Catalyzes the transfer of sulfate to position 3 of terminal glucuronic acid of both protein- and lipid-linked oligosaccharides. Participates in biosynthesis of HNK-1 carbohydrate structure, a sulfated glucuronyl-lactosaminyl residue carried by many neural recognition molecules, which is involved in cell interactions during ontogenetic development and in synaptic plasticity in the adult. The chain is Carbohydrate sulfotransferase 10 (CHST10) from Gallus gallus (Chicken).